The sequence spans 498 residues: 4-aminobutyrate aminotransferase (498 aa).

Residue 164–165 coordinates pyridoxal 5'-phosphate; sequence GS. Arg222 lines the substrate pocket. Lys356 bears the N6-(pyridoxal phosphate)lysine mark. Thr381 serves as a coordination point for pyridoxal 5'-phosphate.

It belongs to the class-III pyridoxal-phosphate-dependent aminotransferase family. Homodimer. The cofactor is pyridoxal 5'-phosphate.

It localises to the cytoplasm. The catalysed reaction is 4-aminobutanoate + 2-oxoglutarate = succinate semialdehyde + L-glutamate. Deaminates gamma-aminobutyric acid (GABA) to succinate-semialdehyde, which in turn is converted to succinate by the succinate semialdehyde dehydrogenase. Required for the degradation of GABA, which is important for utilization of GABA as nitrogen source. The chain is 4-aminobutyrate aminotransferase (gatA) from Emericella nidulans (strain FGSC A4 / ATCC 38163 / CBS 112.46 / NRRL 194 / M139) (Aspergillus nidulans).